Consider the following 171-residue polypeptide: UPF0312 protein SE_0264 (171 aa).

This sequence belongs to the UPF0312 family.

The polypeptide is UPF0312 protein SE_0264 (Staphylococcus epidermidis (strain ATCC 12228 / FDA PCI 1200)).